A 352-amino-acid polypeptide reads, in one-letter code: MTQNDLMSELKQQALVDINEANDAQALQEVKVKYLGKKGSVSALMKNMKDLPNEEKPAYGQKVNELRQTIQSELDERQKLIKEEKLNQQLSEETIDVTLPSRHIEIGSKHPLTRTVEEIEDLFLGLGYEIVDGYEVEQDYYNFEALNLPKSHPARDMQDSFYITEEILMRTHTSPVQARTMEKRKGQGPVKIICPGKVYRRDSDDATHSHQFTQIEGLVVDKNIKMSDLKGTLELVAKKLFGADREIRLRPSYFPFTEPSVEVDVSCFKCKGQGCNVCKHTGWIEILGAGMVHPNVLEMAGFDSKEYSGFAFGMGPDRIAMLKYGIEDIRHFYTNDVRFLDQFKAVEDRGEQ.

Mg(2+) is bound at residue Glu258.

The protein belongs to the class-II aminoacyl-tRNA synthetase family. Phe-tRNA synthetase alpha subunit type 1 subfamily. Tetramer of two alpha and two beta subunits. Mg(2+) is required as a cofactor.

The protein resides in the cytoplasm. The catalysed reaction is tRNA(Phe) + L-phenylalanine + ATP = L-phenylalanyl-tRNA(Phe) + AMP + diphosphate + H(+). The polypeptide is Phenylalanine--tRNA ligase alpha subunit (Staphylococcus epidermidis (strain ATCC 35984 / DSM 28319 / BCRC 17069 / CCUG 31568 / BM 3577 / RP62A)).